The primary structure comprises 309 residues: MTDSLTHTSPFLVAALYHFVSVPRFENLQALLQTLCEQSGVKGTLLLAHEGINGTIAGPDAGIAAVLSFLRAQPEFSGLEHKESRASKMPFLRMKVKLKKEIVTMGVEDIDPNKVVGTYVAPQEWNALISDPDTIVIDTRNDYETAIGTFRGALDPKTKTFREFPDWVRSNSGLHNKPKIAMYCTGGIRCEKATAFMKAEGFDEVYHLKGGILKYLEEVPQEESLWDGACFVFDERVSVEHGLKEGEHRLCHACRNPITAEEITSPLYEEGVSCSHCYDTRTEEDRLRYRQRQHQIALARKRGQRHIGS.

One can recognise a Rhodanese domain in the interval 130–224; the sequence is SDPDTIVIDT…YLEEVPQEES (95 aa). Cys184 (cysteine persulfide intermediate) is an active-site residue.

Belongs to the TrhO family.

It carries out the reaction uridine(34) in tRNA + AH2 + O2 = 5-hydroxyuridine(34) in tRNA + A + H2O. Its function is as follows. Catalyzes oxygen-dependent 5-hydroxyuridine (ho5U) modification at position 34 in tRNAs. This Rhizobium leguminosarum bv. trifolii (strain WSM2304) protein is tRNA uridine(34) hydroxylase.